Here is a 256-residue protein sequence, read N- to C-terminus: MVKSHIGSWILVLFVAMWSDVGLCKKRPKPGGGWNTGGSRYPGQGSPGGNRYPPQGGGGWGQPHGGGWGQPHGGGWGQPHGGGWGQPHGGGGWGQGGSHSQWNKPSKPKTNMKHMAGAAAAGAVVGGLGGYMLGSAMSRPLIHFGNDYEDRYYRENMYRYPNQVYYRPVDQYSNQNNFVHDCVNITVKQHTVTTTTKGENFTETDMKIMERVVEQMCVTQYQKESEAYYQRRASAILFSSPPVILLISFLIFLIVG.

The first 24 residues, 1 to 24, serve as a signal peptide directing secretion; it reads MVKSHIGSWILVLFVAMWSDVGLC. Residues 25–41 form an interaction with ADGRG6 region; it reads KKRPKPGGGWNTGGSRY. The interval 25–233 is interaction with GRB2, ERI3 and SYN1; the sequence is KKRPKPGGGW…ESEAYYQRRA (209 aa). Residues 28–110 are disordered; the sequence is PKPGGGWNTG…QWNKPSKPKT (83 aa). A run of 5 repeats spans residues 54–62, 63–70, 71–78, 79–86, and 87–95. Residues 54-95 are 5 X 8 AA tandem repeats of P-H-G-G-G-W-G-Q; it reads PQGGGGWGQPHGGGWGQPHGGGWGQPHGGGWGQPHGGGGWGQ. A compositionally biased stretch (gly residues) spans 55–97; the sequence is QGGGGWGQPHGGGWGQPHGGGWGQPHGGGWGQPHGGGGWGQGG. Residues His-64, Gly-65, Gly-66, His-72, Gly-73, Gly-74, His-80, Gly-81, Gly-82, His-88, Gly-90, and Gly-91 each contribute to the Cu(2+) site. Cys-182 and Cys-217 form a disulfide bridge. Residues Asn-184 and Asn-200 are each glycosylated (N-linked (GlcNAc...) asparagine). Ala-233 carries the GPI-anchor amidated alanine lipid modification. A propeptide spans 234–256 (removed in mature form); that stretch reads SAILFSSPPVILLISFLIFLIVG.

The protein belongs to the prion family. Monomer and homodimer. Has a tendency to aggregate into amyloid fibrils containing a cross-beta spine, formed by a steric zipper of superposed beta-strands. Soluble oligomers may represent an intermediate stage on the path to fibril formation. Copper binding may promote oligomerization. Interacts with GRB2, APP, ERI3/PRNPIP and SYN1. Mislocalized cytosolically exposed PrP interacts with MGRN1; this interaction alters MGRN1 subcellular location and causes lysosomal enlargement. Interacts with APP. Interacts with KIAA1191. Interacts with ADGRG6.

Its subcellular location is the cell membrane. It localises to the golgi apparatus. In terms of biological role, its primary physiological function is unclear. May play a role in neuronal development and synaptic plasticity. May be required for neuronal myelin sheath maintenance. May promote myelin homeostasis through acting as an agonist for ADGRG6 receptor. May play a role in iron uptake and iron homeostasis. Soluble oligomers are toxic to cultured neuroblastoma cells and induce apoptosis (in vitro). Association with GPC1 (via its heparan sulfate chains) targets PRNP to lipid rafts. Also provides Cu(2+) or Zn(2+) for the ascorbate-mediated GPC1 deaminase degradation of its heparan sulfate side chains. This chain is Major prion protein (PRNP), found in Felis catus (Cat).